Reading from the N-terminus, the 263-residue chain is Nicotinamide riboside transporter PnuC (263 aa).

At 1–40 the chain is on the cytoplasmic side; that stretch reads MQYGMDSFGLRGIPHQVFIKKKEGKIMSLAWWKRELFGGW. A helical transmembrane segment spans residues 41–61; that stretch reads THFEAVWLLMFLGIQAVVFVF. Residue Asn62 is a topological domain, periplasmic. The chain crosses the membrane as a helical span at residues 63-83; the sequence is PDSWLASVAAVTGILCVVFVG. Over 84-86 the chain is Cytoplasmic; it reads KGK. A helical membrane pass occupies residues 87 to 107; the sequence is ISNYLFGLISVSLYAYVSYTF. The Periplasmic segment spans residues 108-109; sequence KL. Residues 110–131 traverse the membrane as a helical segment; the sequence is YGEMMLNLLVYVPVQFVGFAMW. Position 124 (Gln124) interacts with beta-nicotinamide D-riboside. Over 132–155 the chain is Cytoplasmic; that stretch reads RKHMALGETAETEEVKAKALTVRQ. The chain crosses the membrane as a helical span at residues 156-177; it reads WLLVVAASVVGTSVYIEWLHHL. The Periplasmic segment spans residues 178-180; sequence GSA. The chain crosses the membrane as a helical span at residues 181-201; it reads LPTLDGVTVVVSIVAQVLMIL. Gln196 lines the beta-nicotinamide D-riboside pocket. Topologically, residues 202-205 are cytoplasmic; the sequence is RYRE. The chain crosses the membrane as a helical span at residues 206–226; it reads QWALWIVVNILTISLWAVAWF. 2 residues coordinate beta-nicotinamide D-riboside: Trp210 and Asn214. Over 227 to 232 the chain is Periplasmic; that stretch reads KNGETS. A helical membrane pass occupies residues 233–253; it reads LPLLLMYVMYLCNSVYGYINW. Residue Tyr242 coordinates beta-nicotinamide D-riboside. Topologically, residues 254 to 263 are cytoplasmic; the sequence is TKLVKRHSGQ.

Belongs to the nicotinamide ribonucleoside (NR) uptake permease (TC 4.B.1) family. In terms of assembly, homotrimer.

It localises to the cell inner membrane. In terms of biological role, required for nicotinamide riboside transport across the inner membrane. The polypeptide is Nicotinamide riboside transporter PnuC (Neisseria mucosa (strain ATCC 25996 / DSM 4631 / NCTC 10774 / M26)).